Consider the following 995-residue polypeptide: Translation initiation factor IF-2 (995 aa).

Residues Asn-53–Val-399 are disordered. 2 stretches are compositionally biased toward pro residues: residues Pro-60–Gly-87 and Thr-104–Ser-119. The segment covering Ala-135–Gln-160 has biased composition (low complexity). Residues Gln-161–Pro-171 are compositionally biased toward basic and acidic residues. Residues Arg-177–Gly-192 show a composition bias toward pro residues. The span at Ser-193–Pro-202 shows a compositional bias: low complexity. 2 stretches are compositionally biased toward pro residues: residues Ala-203–Arg-213 and Arg-242–Ala-264. Residues Arg-273–Gly-363 are compositionally biased toward gly residues. Over residues Thr-367 to Arg-376 the composition is skewed to basic residues. The region spanning Ser-486 to Glu-658 is the tr-type G domain. The segment at Gly-495–Thr-502 is G1. GTP is bound at residue Gly-495–Thr-502. The G2 stretch occupies residues Gly-520–His-524. The tract at residues Asp-545–Gly-548 is G3. GTP-binding positions include Asp-545 to His-549 and Asn-599 to Asp-602. Residues Asn-599–Asp-602 are G4. A G5 region spans residues Ala-635–Lys-637.

The protein belongs to the TRAFAC class translation factor GTPase superfamily. Classic translation factor GTPase family. IF-2 subfamily.

The protein localises to the cytoplasm. In terms of biological role, one of the essential components for the initiation of protein synthesis. Protects formylmethionyl-tRNA from spontaneous hydrolysis and promotes its binding to the 30S ribosomal subunits. Also involved in the hydrolysis of GTP during the formation of the 70S ribosomal complex. The protein is Translation initiation factor IF-2 of Salinispora arenicola (strain CNS-205).